The chain runs to 241 residues: Phosphoribosylaminoimidazole-succinocarboxamide synthase (241 aa).

The protein belongs to the SAICAR synthetase family.

The enzyme catalyses 5-amino-1-(5-phospho-D-ribosyl)imidazole-4-carboxylate + L-aspartate + ATP = (2S)-2-[5-amino-1-(5-phospho-beta-D-ribosyl)imidazole-4-carboxamido]succinate + ADP + phosphate + 2 H(+). It participates in purine metabolism; IMP biosynthesis via de novo pathway; 5-amino-1-(5-phospho-D-ribosyl)imidazole-4-carboxamide from 5-amino-1-(5-phospho-D-ribosyl)imidazole-4-carboxylate: step 1/2. This chain is Phosphoribosylaminoimidazole-succinocarboxamide synthase, found in Deinococcus geothermalis (strain DSM 11300 / CIP 105573 / AG-3a).